The chain runs to 60 residues: Large ribosomal subunit protein uL30 (60 aa).

This sequence belongs to the universal ribosomal protein uL30 family. Part of the 50S ribosomal subunit.

The polypeptide is Large ribosomal subunit protein uL30 (Polaromonas naphthalenivorans (strain CJ2)).